Consider the following 236-residue polypeptide: Adenosine 5'-phosphosulfate reductase (236 aa).

Residues C122, C123, C205, and C208 each contribute to the [4Fe-4S] cluster site. The active-site Nucleophile; cysteine thiosulfonate intermediate is the C231.

It belongs to the PAPS reductase family. CysH subfamily. It depends on [4Fe-4S] cluster as a cofactor.

It is found in the cytoplasm. It carries out the reaction [thioredoxin]-disulfide + sulfite + AMP + 2 H(+) = adenosine 5'-phosphosulfate + [thioredoxin]-dithiol. The protein operates within sulfur metabolism; hydrogen sulfide biosynthesis; sulfite from sulfate. Catalyzes the formation of sulfite from adenosine 5'-phosphosulfate (APS) using thioredoxin as an electron donor. This is Adenosine 5'-phosphosulfate reductase from Mycolicibacterium smegmatis (strain ATCC 700084 / mc(2)155) (Mycobacterium smegmatis).